Here is a 199-residue protein sequence, read N- to C-terminus: NAD(P)H dehydrogenase (quinone) (199 aa).

The region spanning 4–190 (VLVLYYSSWG…DGARFQGRHV (187 aa)) is the Flavodoxin-like domain. FMN is bound by residues 10-15 (SSWGHV) and 78-80 (TRY). Residue W12 participates in NAD(+) binding. W98 contacts substrate. Residues 113-119 (STASQHG) and H134 each bind FMN.

The protein belongs to the WrbA family. The cofactor is FMN.

It catalyses the reaction a quinone + NADH + H(+) = a quinol + NAD(+). The enzyme catalyses a quinone + NADPH + H(+) = a quinol + NADP(+). The protein is NAD(P)H dehydrogenase (quinone) of Methylorubrum extorquens (strain CM4 / NCIMB 13688) (Methylobacterium extorquens).